Reading from the N-terminus, the 1331-residue chain is Contactin-associated protein-like 2 (1331 aa).

An N-terminal signal peptide occupies residues 1–27 (MQAAPRAGCGAALLLWIVSSCLCRAWT). Topologically, residues 28–1262 (APSTSQKCDE…IRNGVNRNSA (1235 aa)) are extracellular. An F5/8 type C domain is found at 35 to 181 (CDEPLVSGLP…IGLRIEVYGC (147 aa)). Residues Cys35 and Cys181 are joined by a disulfide bond. One can recognise a Laminin G-like 1 domain in the interval 216-368 (FKTSESEGVI…SNVGNLSFSC (153 aa)). Asn289, Asn346, Asn363, Asn379, Asn436, Asn506, Asn507, and Asn546 each carry an N-linked (GlcNAc...) asparagine glycan. A disulfide bridge connects residues Cys336 and Cys368. The 152-residue stretch at 401-552 (FRTWNPNGLL…SFANVSIDMC (152 aa)) folds into the Laminin G-like 2 domain. Intrachain disulfides connect Cys520-Cys552, Cys558-Cys569, Cys563-Cys578, and Cys580-Cys590. The 38-residue stretch at 554–591 (IIDRCVPNHCEHGGKCSQTWDSFKCTCDETGYSGATCH) folds into the EGF-like 1 domain. In terms of domain architecture, Fibrinogen C-terminal spans 592-798 (NSIYEPSCEA…LRCQGDRNYW (207 aa)). N-linked (GlcNAc...) asparagine glycosylation is found at Asn630 and Asn735. The Laminin G-like 3 domain occupies 799-963 (NAASFPNPSS…KVTSGFISGC (165 aa)). 4 cysteine pairs are disulfide-bonded: Cys936–Cys963, Cys967–Cys980, Cys974–Cys989, and Cys991–Cys1001. The 40-residue stretch at 963–1002 (CSGHCTSYGTNCENGGKCLERYHGYSCDCSNTAYDGTFCN) folds into the EGF-like 2 domain. The tract at residues 1026 to 1045 (ARDSSSRVDNAPDQQNSHPD) is disordered. In terms of domain architecture, Laminin G-like 4 spans 1055-1214 (FSTTKAPCIL…IQGELVESNC (160 aa)). Residues Asn1116 and Asn1198 are each glycosylated (N-linked (GlcNAc...) asparagine). Residues Cys1178 and Cys1214 are joined by a disulfide bond. Residues 1263-1283 (IIGGVIAVVIFTILCTLVFLI) traverse the membrane as a helical segment. Topologically, residues 1284-1331 (RYMFRHKGTYHTNEAKGAESAESADAAIMNNDPNFTETIDESKKEWLI) are cytoplasmic. Residues Ser1303 and Ser1306 each carry the phosphoserine modification.

This sequence belongs to the neurexin family. In terms of assembly, interacts (via C-terminus) with KCNA2. Interacts with GPR37. Predominantly expressed in nervous system.

Its subcellular location is the membrane. It localises to the cell projection. The protein resides in the axon. The protein localises to the cell junction. It is found in the paranodal septate junction. Functionally, required for gap junction formation. Required, with CNTNAP1, for radial and longitudinal organization of myelinated axons. Plays a role in the formation of functional distinct domains critical for saltatory conduction of nerve impulses in myelinated nerve fibers. Demarcates the juxtaparanodal region of the axo-glial junction. This Homo sapiens (Human) protein is Contactin-associated protein-like 2 (CNTNAP2).